We begin with the raw amino-acid sequence, 201 residues long: Transgelin (201 aa).

Ala-2 carries the N-acetylalanine modification. Residues 24 to 137 (EELEERLVEW…RTLMALGSLA (114 aa)) enclose the Calponin-homology (CH) domain. Ser-166 is subject to Phosphoserine. Position 172 is an N6-acetyllysine (Lys-172). One copy of the Calponin-like repeat lies at 175–200 (IGLQMGSNRGASQAGMTGYGRPRQII). Ser-181 carries the phosphoserine modification. An Omega-N-methylarginine modification is found at Arg-183.

The protein belongs to the calponin family.

The protein resides in the cytoplasm. Its function is as follows. Actin cross-linking/gelling protein. Involved in calcium interactions and contractile properties of the cell that may contribute to replicative senescence. This chain is Transgelin (TAGLN), found in Homo sapiens (Human).